The primary structure comprises 880 residues: Valine--tRNA ligase (880 aa).

The short motif at Pro-48–His-58 is the 'HIGH' region element. Positions Lys-527–Ser-531 match the 'KMSKS' region motif. Position 530 (Lys-530) interacts with ATP. Coiled-coil stretches lie at residues Lys-717–Asn-741 and Leu-810–Lys-880.

This sequence belongs to the class-I aminoacyl-tRNA synthetase family. ValS type 1 subfamily. In terms of assembly, monomer.

It localises to the cytoplasm. It catalyses the reaction tRNA(Val) + L-valine + ATP = L-valyl-tRNA(Val) + AMP + diphosphate. Catalyzes the attachment of valine to tRNA(Val). As ValRS can inadvertently accommodate and process structurally similar amino acids such as threonine, to avoid such errors, it has a 'posttransfer' editing activity that hydrolyzes mischarged Thr-tRNA(Val) in a tRNA-dependent manner. This Clostridium tetani (strain Massachusetts / E88) protein is Valine--tRNA ligase.